The following is a 61-amino-acid chain: Protein TfaX (61 aa).

Belongs to the tfa family.

Might play a role in cell growth during glycolysis. This is Protein TfaX (tfaX) from Escherichia coli (strain K12).